A 339-amino-acid polypeptide reads, in one-letter code: Ketol-acid reductoisomerase (NADP(+)) (339 aa).

One can recognise a KARI N-terminal Rossmann domain in the interval 1 to 182; sequence MRVYYDRDAD…GGGRSGVIET (182 aa). NADP(+) contacts are provided by residues 24–27, Arg48, Ser51, Thr53, and 83–86; these read YGSQ and DELQ. The active site involves His108. NADP(+) is bound at residue Gly134. Residues 183 to 328 enclose the KARI C-terminal knotted domain; it reads TFKEECETDL…GKLRAMMPWI (146 aa). Mg(2+) is bound by residues Asp191, Glu195, Glu227, and Glu231. Residue Ser252 participates in substrate binding.

It belongs to the ketol-acid reductoisomerase family. Requires Mg(2+) as cofactor.

The catalysed reaction is (2R)-2,3-dihydroxy-3-methylbutanoate + NADP(+) = (2S)-2-acetolactate + NADPH + H(+). It carries out the reaction (2R,3R)-2,3-dihydroxy-3-methylpentanoate + NADP(+) = (S)-2-ethyl-2-hydroxy-3-oxobutanoate + NADPH + H(+). The protein operates within amino-acid biosynthesis; L-isoleucine biosynthesis; L-isoleucine from 2-oxobutanoate: step 2/4. It participates in amino-acid biosynthesis; L-valine biosynthesis; L-valine from pyruvate: step 2/4. Functionally, involved in the biosynthesis of branched-chain amino acids (BCAA). Catalyzes an alkyl-migration followed by a ketol-acid reduction of (S)-2-acetolactate (S2AL) to yield (R)-2,3-dihydroxy-isovalerate. In the isomerase reaction, S2AL is rearranged via a Mg-dependent methyl migration to produce 3-hydroxy-3-methyl-2-ketobutyrate (HMKB). In the reductase reaction, this 2-ketoacid undergoes a metal-dependent reduction by NADPH to yield (R)-2,3-dihydroxy-isovalerate. The polypeptide is Ketol-acid reductoisomerase (NADP(+)) (Brucella suis (strain ATCC 23445 / NCTC 10510)).